The primary structure comprises 231 residues: Orotidine 5'-phosphate decarboxylase (231 aa).

Substrate-binding positions include Asp-11, Lys-33, 60–69 (DLKFHDIPNT), Thr-120, Arg-181, Gln-190, Gly-210, and Arg-211. Lys-62 functions as the Proton donor in the catalytic mechanism.

Belongs to the OMP decarboxylase family. Type 1 subfamily. As to quaternary structure, homodimer.

The catalysed reaction is orotidine 5'-phosphate + H(+) = UMP + CO2. It functions in the pathway pyrimidine metabolism; UMP biosynthesis via de novo pathway; UMP from orotate: step 2/2. Functionally, catalyzes the decarboxylation of orotidine 5'-monophosphate (OMP) to uridine 5'-monophosphate (UMP). The polypeptide is Orotidine 5'-phosphate decarboxylase (Colwellia psychrerythraea (strain 34H / ATCC BAA-681) (Vibrio psychroerythus)).